A 396-amino-acid chain; its full sequence is MISKLFGRGKFFRNVALQVRFNSSEAVEFRPLHSSLISRAELYVNELRELEDLLSQGGSFDLEKQKNFAKLSTIVDSYSKYREEVNQYKELQEILELDPSLREEAEADIAALLPDLNKTGDSLLNKLLPPHPFADKPSILELRPGVGGSEAMIFTQDLLNMYINYANYHKWKWNLISKTENASGSGVLEAILNIDEPGSYDKLKFEAGVHRVQRVPATESKGRTHTSTAAVIVLPKMGEESESDAYERTFKPDEIRIDVMRASGKGGQHVNTTDSAVRLTHYPSGIVISMQEERSQHRNKAKAFAILRARLAEKERLEKEEKERNARKDQVSTTDRSDKIRTYNYPQNRITDHRCGFTLYDIEGVMKGERLDDVIDAMDAFSSEQKAKQLLQDMSA.

Position 268 is an N5-methylglutamine (Q268). Residues 317-340 (LEKEEKERNARKDQVSTTDRSDKI) form a disordered region.

Belongs to the prokaryotic/mitochondrial release factor family. In terms of processing, methylation of glutamine in the GGQ triplet is conserved from bacteria to mammals.

The protein localises to the mitochondrion. Its function is as follows. Mitochondrial peptide chain release factor that directs the termination of translation in response to the peptide chain termination codons UAA and UAG. The polypeptide is Peptide chain release factor 1, mitochondrial (MRF1) (Kluyveromyces lactis (strain ATCC 8585 / CBS 2359 / DSM 70799 / NBRC 1267 / NRRL Y-1140 / WM37) (Yeast)).